Consider the following 1082-residue polypeptide: Mediator of RNA polymerase II transcription subunit 14 (1082 aa).

Disordered regions lie at residues 1 to 80 (MTTT…APPP) and 319 to 343 (EATS…NLPL). Position 2 is an N-acetylthreonine (T2). S7 carries the phosphoserine modification. The span at 13–28 (NEERLSNEMHALKNRS) shows a compositional bias: basic and acidic residues. Residues 29-59 (EQNGQEQQGPVKNTQLHGPSATDPETTATQK) show a composition bias toward polar residues. Over residues 321-340 (TSTNGDSENNEENSSSNGNN) the composition is skewed to low complexity. T1036 is modified (phosphothreonine).

Belongs to the Mediator complex subunit 14 family. In terms of assembly, component of the Mediator complex, which is composed of at least 21 subunits that form three structurally distinct submodules. The Mediator head module contains MED6, MED8, MED11, SRB4/MED17, SRB5/MED18, ROX3/MED19, SRB2/MED20 and SRB6/MED22, the middle module contains MED1, MED4, NUT1/MED5, MED7, CSE2/MED9, NUT2/MED10, SRB7/MED21 and SOH1/MED31, and the tail module contains MED2, PGD1/MED3, RGR1/MED14, GAL11/MED15 and SIN4/MED16. The head and the middle modules interact directly with RNA polymerase II, whereas the elongated tail module interacts with gene-specific regulatory proteins.

It localises to the nucleus. Component of the Mediator complex, a coactivator involved in the regulated transcription of nearly all RNA polymerase II-dependent genes. Mediator functions as a bridge to convey information from gene-specific regulatory proteins to the basal RNA polymerase II transcription machinery. The Mediator complex, having a compact conformation in its free form, is recruited to promoters by direct interactions with regulatory proteins and serves for the assembly of a functional preinitiation complex with RNA polymerase II and the general transcription factors. The Mediator complex unfolds to an extended conformation and partially surrounds RNA polymerase II, specifically interacting with the unphosphorylated form of the C-terminal domain (CTD) of RNA polymerase II. The Mediator complex dissociates from the RNA polymerase II holoenzyme and stays at the promoter when transcriptional elongation begins. This Saccharomyces cerevisiae (strain ATCC 204508 / S288c) (Baker's yeast) protein is Mediator of RNA polymerase II transcription subunit 14 (RGR1).